Consider the following 337-residue polypeptide: ATP-dependent 6-phosphofructokinase (337 aa).

Position 11 (Gly-11) interacts with ATP. 21–25 (RAVVR) serves as a coordination point for ADP. ATP contacts are provided by residues 72–73 (RY) and 102–105 (GDGS). Asp-103 is a binding site for Mg(2+). Residue 125 to 127 (TID) coordinates substrate. Asp-127 functions as the Proton acceptor in the catalytic mechanism. ADP is bound at residue Arg-154. Residues Arg-162 and 169–171 (MGR) each bind substrate. Residues 185 to 187 (GAD), Arg-212, and 214 to 216 (KNH) each bind ADP. Residues Glu-223, Arg-245, and 251-254 (HILR) contribute to the substrate site.

The protein belongs to the phosphofructokinase type A (PFKA) family. ATP-dependent PFK group I subfamily. Prokaryotic clade 'B1' sub-subfamily. As to quaternary structure, homotetramer. It depends on Mg(2+) as a cofactor.

The protein resides in the cytoplasm. The enzyme catalyses beta-D-fructose 6-phosphate + ATP = beta-D-fructose 1,6-bisphosphate + ADP + H(+). Its pathway is carbohydrate degradation; glycolysis; D-glyceraldehyde 3-phosphate and glycerone phosphate from D-glucose: step 3/4. Allosterically activated by ADP and other diphosphonucleosides, and allosterically inhibited by phosphoenolpyruvate. In terms of biological role, catalyzes the phosphorylation of D-fructose 6-phosphate to fructose 1,6-bisphosphate by ATP, the first committing step of glycolysis. This Streptococcus equi subsp. equi (strain 4047) protein is ATP-dependent 6-phosphofructokinase.